The following is a 564-amino-acid chain: NADPH oxidase 1 (564 aa).

Over 1–9 (MGNWVVNHW) the chain is Cytoplasmic. A helical membrane pass occupies residues 10–30 (FSVLFLVVWLGLNVFLFVDAF). Over 31 to 44 (LKYEKADKYYYTRK) the chain is Extracellular. A helical transmembrane segment spans residues 45–72 (ILGSTLACARASALCLNFNSTLILLPVC). One can recognise a Ferric oxidoreductase domain in the interval 54-283 (RASALCLNFN…LAPVILYICE (230 aa)). Topologically, residues 73-102 (RNLLSFLRGTCSFCSRTLRKQLDHNLTFHK) are cytoplasmic. The heme site is built by His-101 and His-115. Residues 103-123 (LVAYMICLHTAIHIIAHLFNF) form a helical membrane-spanning segment. Residues 124–168 (DCYSRSRQATDGSLASILSSLSHDEKKGGSWLNPIQSRNTTVEYV) lie on the Extracellular side of the membrane. A glycan (N-linked (GlcNAc...) asparagine) is linked at Asn-162. The helical transmembrane segment at 169-189 (TFTSIAGLTGVIMTIALILMV) threads the bilayer. Over 190 to 206 (TSATEFIRRSYFEVFWY) the chain is Cytoplasmic. A helical transmembrane segment spans residues 207-227 (THHLFIFYILGLGIHGIGGIV). Heme is bound by residues His-209 and His-221. Residues 228–396 (RGQTEESMNE…TASEDVFQYE (169 aa)) are Extracellular-facing. N-linked (GlcNAc...) asparagine glycosylation is present at Asn-236. The 108-residue stretch at 284 to 391 (RILRFYRSQQ…DGPFGTASED (108 aa)) folds into the FAD-binding FR-type domain. An FAD-binding site is contributed by 338 to 344 (HPFTLTS). The chain crosses the membrane as a helical span at residues 397–417 (VAVLVGAGIGVTPFASILKSI). Positions 397–536 (VAVLVGAGIG…GVFLCGPRTL (140 aa)) are interaction with NOXO1. At 418-564 (WYKFQCADHN…VQFYFNKENF (147 aa)) the chain is on the cytoplasmic side. A Phosphothreonine modification is found at Thr-430.

NOX1, NOXA1, NOXO1, RAC1 and CYBA forms a functional multimeric complex supporting reactive oxygen species (ROS) production. Interacts with NOXO1. Interacts (via FAD-binding FR-type domain) with ARHGEF7 (via PH domain). The phosphorylated form at Thr-430 interacts with NOXA1 with greater affinity. Requires FAD as cofactor. Phosphorylation at Thr-430 mediated by PKC/PRKBC positively regulates its interaction with NOXA1 and enzyme activity. As to expression, detected in colon, uterus, prostate, and colon carcinoma, but not in peripheral blood leukocytes.

The protein resides in the cell projection. It localises to the invadopodium membrane. The protein localises to the cell membrane. It carries out the reaction NADPH + 2 O2 = 2 superoxide + NADP(+) + H(+). Its activity is regulated as follows. The oxidase activity is potentiated by NOXA1, NOXO1 and RAC1. Functionally, NADPH oxidase that catalyzes the generation of superoxide from molecular oxygen utilizing NADPH as an electron donor. This Homo sapiens (Human) protein is NADPH oxidase 1.